The chain runs to 422 residues: Serine--tRNA ligase (422 aa).

Residue Thr229–Glu231 coordinates L-serine. Arg260–Glu262 contributes to the ATP binding site. Glu283 contributes to the L-serine binding site. Glu347–Ser350 is a binding site for ATP. Ser383 contacts L-serine.

The protein belongs to the class-II aminoacyl-tRNA synthetase family. Type-1 seryl-tRNA synthetase subfamily. In terms of assembly, homodimer. The tRNA molecule binds across the dimer.

It localises to the cytoplasm. It carries out the reaction tRNA(Ser) + L-serine + ATP = L-seryl-tRNA(Ser) + AMP + diphosphate + H(+). The catalysed reaction is tRNA(Sec) + L-serine + ATP = L-seryl-tRNA(Sec) + AMP + diphosphate + H(+). Its pathway is aminoacyl-tRNA biosynthesis; selenocysteinyl-tRNA(Sec) biosynthesis; L-seryl-tRNA(Sec) from L-serine and tRNA(Sec): step 1/1. Functionally, catalyzes the attachment of serine to tRNA(Ser). Is also able to aminoacylate tRNA(Sec) with serine, to form the misacylated tRNA L-seryl-tRNA(Sec), which will be further converted into selenocysteinyl-tRNA(Sec). The protein is Serine--tRNA ligase of Geobacter sp. (strain M21).